The following is a 342-amino-acid chain: Ketol-acid reductoisomerase (NADP(+)) (342 aa).

The KARI N-terminal Rossmann domain occupies 2 to 181 (VKVYYNGDIK…GGARAGVLET (180 aa)). Residues 25 to 28 (YGSQ), Arg48, Ser52, and 82 to 85 (DEQQ) each bind NADP(+). The active site involves His107. Gly133 is an NADP(+) binding site. The 146-residue stretch at 182–327 (TFKEETETDL…RKLREMMPFV (146 aa)) folds into the KARI C-terminal knotted domain. 4 residues coordinate Mg(2+): Asp190, Glu194, Glu226, and Glu230. Ser251 contacts substrate.

This sequence belongs to the ketol-acid reductoisomerase family. Requires Mg(2+) as cofactor.

The catalysed reaction is (2R)-2,3-dihydroxy-3-methylbutanoate + NADP(+) = (2S)-2-acetolactate + NADPH + H(+). It catalyses the reaction (2R,3R)-2,3-dihydroxy-3-methylpentanoate + NADP(+) = (S)-2-ethyl-2-hydroxy-3-oxobutanoate + NADPH + H(+). Its pathway is amino-acid biosynthesis; L-isoleucine biosynthesis; L-isoleucine from 2-oxobutanoate: step 2/4. It functions in the pathway amino-acid biosynthesis; L-valine biosynthesis; L-valine from pyruvate: step 2/4. Its function is as follows. Involved in the biosynthesis of branched-chain amino acids (BCAA). Catalyzes an alkyl-migration followed by a ketol-acid reduction of (S)-2-acetolactate (S2AL) to yield (R)-2,3-dihydroxy-isovalerate. In the isomerase reaction, S2AL is rearranged via a Mg-dependent methyl migration to produce 3-hydroxy-3-methyl-2-ketobutyrate (HMKB). In the reductase reaction, this 2-ketoacid undergoes a metal-dependent reduction by NADPH to yield (R)-2,3-dihydroxy-isovalerate. The sequence is that of Ketol-acid reductoisomerase (NADP(+)) from Bacillus subtilis (strain 168).